A 1258-amino-acid polypeptide reads, in one-letter code: Phosphatidylinositol 3,4,5-trisphosphate 5-phosphatase 2 (1258 aa).

The region spanning 21–117 (WYHRDLSRAA…GLVCALLLPV (97 aa)) is the SH2 domain. Residues 119-132 (GEREPDPPDDRDAS) are compositionally biased toward basic and acidic residues. The segment at 119–180 (GEREPDPPDD…AESAPNGLST (62 aa)) is disordered. Serine 132 carries the phosphoserine modification. Residues 145 to 155 (SGSTSISAPTG) show a composition bias toward polar residues. The segment covering 156–166 (PSSPLPAPETP) has biased composition (pro residues). Threonine 165 carries the post-translational modification Phosphothreonine. Serine 241 and serine 352 each carry phosphoserine. Tyrosine 886 is subject to Phosphotyrosine. Serine 890 bears the Phosphoserine mark. A disordered region spans residues 897–1118 (GAKSKAPSVS…FLGEVASGDD (222 aa)). A compositionally biased stretch (pro residues) spans 938–950 (PPPTGRPPAPPRA). The short motif at 944–949 (PPAPPR) is the SH3-binding element. Residues 951–965 (APREEPLTPRLKPEG) are compositionally biased toward basic and acidic residues. Phosphothreonine is present on threonine 958. The short motif at 983–986 (NPAY) is the NPXY motif element. Tyrosine 986 carries the post-translational modification Phosphotyrosine; by SRC. 3 stretches are compositionally biased toward pro residues: residues 996 to 1007 (LLPPEPPSPARA), 1048 to 1059 (LPPPDFPPPPLP), and 1087 to 1104 (GPPP…PGPS). Serine 1131 bears the Phosphoserine mark. Tyrosine 1135 and tyrosine 1162 each carry phosphotyrosine. The SAM domain maps to 1196–1258 (LGEAGMSAWL…LLLDTLQLSK (63 aa)). The residue at position 1257 (serine 1257) is a Phosphoserine.

Belongs to the inositol 1,4,5-trisphosphate 5-phosphatase family. As to quaternary structure, interacts with tyrosine phosphorylated form of SHC1. Interacts with EGFR. Upon stimulation by the EGF signaling pathway, it forms a complex with SHC1 and EGFR. Interacts with cytoskeletal protein SORBS3/vinexin, promoting its localization to the periphery of cells. Forms a complex with filamin (FLNA or FLNB), actin, GPIb (GP1BA or GP1BB) that regulates cortical and submembraneous actin. Interacts with c-Met/MET, when c-Met/MET is phosphorylated on 'Tyr-1356'. Interacts with p130Cas/BCAR1. Interacts with CENTD3/ARAP3 via its SAM domain. Interacts with c-Cbl/CBL and CAP/SORBS1. Interacts with activated EPHA2 receptor. Interacts with receptor FCGR2A. Interacts with receptor FCGR2B. Interacts with tyrosine kinase ABL1. Interacts with tyrosine kinase TEC. Interacts with CSF1R. Interacts (via N-terminus) with SH3YL1 (via SH3 domain). Interacts with FCRL6 (tyrosine phosphorylated form). Interacts (via SH2 domain) with tyrosine phosphorylated KLRC1 (via ITIM). Interacts with NEDD9/HEF1. Tyrosine phosphorylated by the members of the SRC family after exposure to a diverse array of extracellular stimuli such as insulin, growth factors such as EGF or PDGF, chemokines, integrin ligands and hypertonic and oxidative stress. May be phosphorylated upon IgG receptor FCGR2B-binding. Phosphorylated at Tyr-986 following cell attachment and spreading. Phosphorylated at Tyr-1162 following EGF signaling pathway stimulation. Phosphorylated at Thr-958 in response to PDGF. As to expression, widely expressed, most prominently in skeletal muscle, heart and brain. Present in platelets. Expressed in transformed myeloid cells and in primary macrophages, but not in peripheral blood monocytes.

Its subcellular location is the cytoplasm. The protein resides in the cytosol. The protein localises to the cytoskeleton. It is found in the membrane. It localises to the cell projection. Its subcellular location is the filopodium. The protein resides in the lamellipodium. The protein localises to the basal cell membrane. It is found in the nucleus. It localises to the nucleus speckle. Its subcellular location is the spindle pole. The catalysed reaction is a 1,2-diacyl-sn-glycero-3-phospho-(1D-myo-inositol-3,4,5-trisphosphate) + H2O = a 1,2-diacyl-sn-glycero-3-phospho-(1D-myo-inositol-3,4-bisphosphate) + phosphate. The enzyme catalyses 1,2-dioctanoyl-sn-glycero-3-phospho-(1D-myo-inositol-3,4,5-trisphosphate) + H2O = 1,2-dioctanoyl-sn-glycero-3-phospho-(1D-myo-inositol-3,4-bisphosphate) + phosphate. It carries out the reaction 1,2-dihexadecanoyl-sn-glycero-3-phospho-(1D-myo-inositol-3,4,5-trisphosphate) + H2O = 1,2-dihexadecanoyl-sn-glycero-3-phospho-(1D-myo-inositol-3,4-bisphosphate) + phosphate. Activated upon translocation to the sites of synthesis of PtdIns(3,4,5)P3 in the membrane. Enzymatic activity is enhanced in the presence of phosphatidylserine. Its function is as follows. Phosphatidylinositol (PtdIns) phosphatase that specifically hydrolyzes the 5-phosphate of phosphatidylinositol-3,4,5-trisphosphate (PtdIns(3,4,5)P3) to produce PtdIns(3,4)P2, thereby negatively regulating the PI3K (phosphoinositide 3-kinase) pathways. Required for correct mitotic spindle orientation and therefore progression of mitosis. Plays a central role in regulation of PI3K-dependent insulin signaling, although the precise molecular mechanisms and signaling pathways remain unclear. While overexpression reduces both insulin-stimulated MAP kinase and Akt activation, its absence does not affect insulin signaling or GLUT4 trafficking. Confers resistance to dietary obesity. May act by regulating AKT2, but not AKT1, phosphorylation at the plasma membrane. Part of a signaling pathway that regulates actin cytoskeleton remodeling. Required for the maintenance and dynamic remodeling of actin structures as well as in endocytosis, having a major impact on ligand-induced EGFR internalization and degradation. Participates in regulation of cortical and submembraneous actin by hydrolyzing PtdIns(3,4,5)P3 thereby regulating membrane ruffling. Regulates cell adhesion and cell spreading. Required for HGF-mediated lamellipodium formation, cell scattering and spreading. Acts as a negative regulator of EPHA2 receptor endocytosis by inhibiting via PI3K-dependent Rac1 activation. Acts as a regulator of neuritogenesis by regulating PtdIns(3,4,5)P3 level and is required to form an initial protrusive pattern, and later, maintain proper neurite outgrowth. Acts as a negative regulator of the FC-gamma-RIIA receptor (FCGR2A). Mediates signaling from the FC-gamma-RIIB receptor (FCGR2B), playing a central role in terminating signal transduction from activating immune/hematopoietic cell receptor systems. Involved in EGF signaling pathway. Upon stimulation by EGF, it is recruited by EGFR and dephosphorylates PtdIns(3,4,5)P3. Plays a negative role in regulating the PI3K-PKB pathway, possibly by inhibiting PKB activity. Down-regulates Fc-gamma-R-mediated phagocytosis in macrophages independently of INPP5D/SHIP1. In macrophages, down-regulates NF-kappa-B-dependent gene transcription by regulating macrophage colony-stimulating factor (M-CSF)-induced signaling. Plays a role in the localization of AURKA and NEDD9/HEF1 to the basolateral membrane at interphase in polarized cysts, thereby mediates cell cycle homeostasis, cell polarization and cilia assembly. Additionally promotion of cilia growth is also facilitated by hydrolysis of (PtdIns(3,4,5)P3) to PtdIns(3,4)P2. Promotes formation of apical membrane-initiation sites during the initial stages of lumen formation via Rho family-induced actin filament organization and CTNNB1 localization to cell-cell contacts. May also hydrolyze PtdIns(1,3,4,5)P4, and could thus affect the levels of the higher inositol polyphosphates like InsP6. Involved in endochondral ossification. This chain is Phosphatidylinositol 3,4,5-trisphosphate 5-phosphatase 2, found in Homo sapiens (Human).